A 238-amino-acid polypeptide reads, in one-letter code: Probable phosphatase phospho2 (238 aa).

Aspartate 8 functions as the Nucleophile in the catalytic mechanism. Mg(2+)-binding residues include aspartate 8 and aspartate 10. The active-site Proton donor is aspartate 10. The substrate site is built by aspartate 19 and aspartate 99. Aspartate 179 is a Mg(2+) binding site.

Belongs to the HAD-like hydrolase superfamily. PHOSPHO family. Mg(2+) serves as cofactor.

Probable phosphatase. The polypeptide is Probable phosphatase phospho2 (phospho2) (Xenopus tropicalis (Western clawed frog)).